The primary structure comprises 1382 residues: ATP-dependent RNA helicase TDRD9 (1382 aa).

Residues Ala36–Ala62 are disordered. Low complexity predominate over residues Ala47–Ala62. A Helicase ATP-binding domain is found at Val142 to Asn308. Residue Gly155–Ser162 coordinates ATP. Positions Asp254–His257 match the DEAH box motif. The 168-residue stretch at Ser377 to Gly544 folds into the Helicase C-terminal domain. The Tudor domain maps to His944–Leu1004.

It belongs to the DEAD box helicase family. DEAH subfamily. As to quaternary structure, interacts with piRNA-associated proteins PIWIL1 and PIWIL4.

It localises to the cytoplasm. The protein resides in the nucleus. It carries out the reaction ATP + H2O = ADP + phosphate + H(+). Functionally, ATP-binding RNA helicase required during spermatogenesis. Required to repress transposable elements and prevent their mobilization, which is essential for the germline integrity. Acts via the piRNA metabolic process, which mediates the repression of transposable elements during meiosis by forming complexes composed of piRNAs and Piwi proteins and governs the methylation and subsequent repression of transposons. Acts downstream of piRNA biogenesis: exclusively required for transposon silencing in the nucleus, suggesting that it acts as a nuclear effector in the nucleus together with PIWIL4. This Homo sapiens (Human) protein is ATP-dependent RNA helicase TDRD9.